Reading from the N-terminus, the 152-residue chain is Xanthine-guanine phosphoribosyltransferase (152 aa).

Residues 37–38, arginine 69, and 88–96 each bind 5-phospho-alpha-D-ribose 1-diphosphate; these read RG and DDLVDTGGT. A GMP-binding site is contributed by arginine 69. Mg(2+) is bound at residue aspartate 89. Guanine contacts are provided by aspartate 92 and isoleucine 135. The xanthine site is built by aspartate 92 and isoleucine 135. GMP-binding positions include 92–96 and 134–135; these read DTGGT and WI.

The protein belongs to the purine/pyrimidine phosphoribosyltransferase family. XGPT subfamily. Homotetramer. Requires Mg(2+) as cofactor.

Its subcellular location is the cell inner membrane. The enzyme catalyses GMP + diphosphate = guanine + 5-phospho-alpha-D-ribose 1-diphosphate. The catalysed reaction is XMP + diphosphate = xanthine + 5-phospho-alpha-D-ribose 1-diphosphate. It carries out the reaction IMP + diphosphate = hypoxanthine + 5-phospho-alpha-D-ribose 1-diphosphate. Its pathway is purine metabolism; GMP biosynthesis via salvage pathway; GMP from guanine: step 1/1. It functions in the pathway purine metabolism; XMP biosynthesis via salvage pathway; XMP from xanthine: step 1/1. Purine salvage pathway enzyme that catalyzes the transfer of the ribosyl-5-phosphate group from 5-phospho-alpha-D-ribose 1-diphosphate (PRPP) to the N9 position of the 6-oxopurines guanine and xanthine to form the corresponding ribonucleotides GMP (guanosine 5'-monophosphate) and XMP (xanthosine 5'-monophosphate), with the release of PPi. To a lesser extent, also acts on hypoxanthine. In Yersinia pseudotuberculosis serotype O:1b (strain IP 31758), this protein is Xanthine-guanine phosphoribosyltransferase.